A 73-amino-acid polypeptide reads, in one-letter code: MVYPFFYIMHGLTFLKENGRQFKVLILPSKVFSKAYLETLMEDFKSLGYSVSVEERDGRYVLKVTDKIVILGE.

This is an uncharacterized protein from Saccharolobus islandicus (Sulfolobus islandicus).